An 83-amino-acid chain; its full sequence is Apolipoprotein C-I, basic form (83 aa).

The first 26 residues, 1 to 26, serve as a signal peptide directing secretion; that stretch reads MRLFLSLPVLVVVLSIVLEGPAPAQG.

The protein belongs to the apolipoprotein C1 family.

Its subcellular location is the secreted. Inhibitor of lipoprotein binding to the low density lipoprotein (LDL) receptor, LDL receptor-related protein, and very low density lipoprotein (VLDL) receptor. Associates with high density lipoproteins (HDL) and the triacylglycerol-rich lipoproteins in the plasma and makes up about 10% of the protein of the VLDL and 2% of that of HDL. Appears to interfere directly with fatty acid uptake and is also the major plasma inhibitor of cholesteryl ester transfer protein (CETP). Binds free fatty acids and reduces their intracellular esterification. Modulates the interaction of APOE with beta-migrating VLDL and inhibits binding of beta-VLDL to the LDL receptor-related protein. The chain is Apolipoprotein C-I, basic form (APOC1B) from Pan troglodytes (Chimpanzee).